Here is a 764-residue protein sequence, read N- to C-terminus: Thyrotropin receptor (764 aa).

An N-terminal signal peptide occupies residues 1 to 21 (MSLTPLLQLALLLALPRSLRG). Over 22–413 (KGCPSPPCEC…EFNPCEDIMG (392 aa)) the chain is Extracellular. Cysteine 31 and cysteine 41 are joined by a disulfide. 2 N-linked (GlcNAc...) asparagine glycosylation sites follow: asparagine 77 and asparagine 99. 6 LRR repeats span residues 125-150 (LPLLKFLGIFNTGLRIFPDLTKVYST), 151-174 (DVFFILEITDNPYMTSIPANAFQG), 176-199 (CNETLTLKLYNNGFTSVQGHAFNG), 201-223 (KLDAVYLNKNKYLTVIDKDAFGG), 225-248 (FSGPTLLDVSYTSVTALPPKGLEH), and 250-271 (KELIARNTWTLKKLPLSLSFLH). Residues asparagine 177 and asparagine 198 are each glycosylated (N-linked (GlcNAc...) asparagine). N-linked (GlcNAc...) asparagine glycosylation occurs at asparagine 302. A Sulfotyrosine modification is found at tyrosine 385. Residues 414-441 (YRFLRIVVWFVSLLALLGNVFVLVILLT) form a helical membrane-spanning segment. Residues 442–450 (SHYKLTVPR) are Cytoplasmic-facing. A helical transmembrane segment spans residues 451 to 473 (FLMCNLAFADFCMGMYLLLIASV). The Extracellular segment spans residues 474–494 (DLYTQSEYYNHAIDWQTGPGC). Cysteine 494 and cysteine 569 are disulfide-bonded. A helical membrane pass occupies residues 495–517 (NTAGFFTVFASELSVYTLTVITL). The Cytoplasmic portion of the chain corresponds to 518–537 (ERWYAITFAMRLDRKIRLRH). A helical transmembrane segment spans residues 538–560 (AYAIMAGGWVCCFLLALLPLVGI). At 561–580 (SSYAKVSICLPMDTETPLAL) the chain is on the extracellular side. Residues 581–602 (AYIILVLLLNIVAFTIVCSCYV) traverse the membrane as a helical segment. Over 603-625 (KIYITVRNPQYNPGDKDTKIAKR) the chain is Cytoplasmic. Residues 626-649 (MAVLIFTDFMCMAPISFYALSALM) form a helical membrane-spanning segment. The Extracellular segment spans residues 650–660 (NKPLITVTNSK). The chain crosses the membrane as a helical span at residues 661–682 (ILLVLFYPLNSCANPFLYAIFT). The Cytoplasmic portion of the chain corresponds to 683-764 (KAFQRDVFIL…ISKEYKQPVL (82 aa)). A PDZ-binding motif is present at residues 762 to 764 (PVL).

This sequence belongs to the G-protein coupled receptor 1 family. FSH/LSH/TSH subfamily. Interacts with heterodimer GPHA2:GPHB5; this interaction stimulates cAMP production. Interacts (via the PDZ-binding motif) with SCRIB; regulates TSHR trafficking and function. Glycosylated. In terms of processing, sulfated. Sulfation on Tyr-385 plays a role in thyrotropin receptor binding and activation. In terms of tissue distribution, expressed in thyroide cells (at protein level).

It is found in the cell membrane. It localises to the basolateral cell membrane. Functionally, receptor for the thyroid-stimulating hormone (TSH) or thyrotropin. Also acts as a receptor for the heterodimeric glycoprotein hormone (GPHA2:GPHB5) or thyrostimulin. The activity of this receptor is mediated by G proteins which activate adenylate cyclase. Plays a central role in controlling thyroid cell metabolism. The sequence is that of Thyrotropin receptor (TSHR) from Sus scrofa (Pig).